The following is a 362-amino-acid chain: Heat-inducible transcription repressor HrcA (362 aa).

This sequence belongs to the HrcA family.

Its function is as follows. Negative regulator of class I heat shock genes (grpE-dnaK-dnaJ and groELS operons). Prevents heat-shock induction of these operons. This Nitrobacter hamburgensis (strain DSM 10229 / NCIMB 13809 / X14) protein is Heat-inducible transcription repressor HrcA.